A 213-amino-acid chain; its full sequence is Iron sulfur cluster assembly protein 1, mitochondrial (213 aa).

Belongs to the NifU family. In terms of assembly, component of the core Fe-S cluster (ISC) assembly machinery. Requires [2Fe-2S] cluster as cofactor.

It is found in the mitochondrion matrix. Its pathway is cofactor biosynthesis; iron-sulfur cluster biosynthesis. Its function is as follows. Scaffold protein for the de novo synthesis of iron-sulfur (Fe-S) clusters within mitochondria, which is required for maturation of both mitochondrial and cytoplasmic [2Fe-2S] and [4Fe-4S] proteins. First, a [2Fe-2S] cluster is transiently assembled on the scaffold protein ISU1. In a second step, the cluster is released from ISU1, transferred to a glutaredoxin, followed by the formation of mitochondrial [2Fe-2S] proteins, the synthesis of [4Fe-4S] clusters and their target-specific insertion into the recipient apoproteins. Cluster assembly on ISU1 depends on the function of the cysteine desulfurase complex NFS1-ISD11, which serves as the sulfur donor for cluster synthesis, the iron-binding protein frataxin as the putative iron donor, and the electron transfer chain comprised of ferredoxin reductase and ferredoxin, which receive their electrons from NADH. The polypeptide is Iron sulfur cluster assembly protein 1, mitochondrial (ISU1) (Candida glabrata (strain ATCC 2001 / BCRC 20586 / JCM 3761 / NBRC 0622 / NRRL Y-65 / CBS 138) (Yeast)).